The following is a 513-amino-acid chain: Glutamate--tRNA ligase 2 (513 aa).

Positions 11 to 21 (PSPTGFLHIGS) match the 'HIGH' region motif. A 'KMSKS' region motif is present at residues 240-244 (KLSKR). An ATP-binding site is contributed by K243.

This sequence belongs to the class-I aminoacyl-tRNA synthetase family. Glutamate--tRNA ligase type 1 subfamily. Monomer.

It localises to the cytoplasm. It catalyses the reaction tRNA(Glu) + L-glutamate + ATP = L-glutamyl-tRNA(Glu) + AMP + diphosphate. Catalyzes the attachment of glutamate to tRNA(Glu) in a two-step reaction: glutamate is first activated by ATP to form Glu-AMP and then transferred to the acceptor end of tRNA(Glu). The protein is Glutamate--tRNA ligase 2 of Rickettsia rickettsii (strain Iowa).